A 335-amino-acid polypeptide reads, in one-letter code: Fructose-1,6-bisphosphatase class 1 (335 aa).

Positions 92, 114, 116, and 117 each coordinate Mg(2+). Residues 117-120 and Asn209 each bind substrate; that span reads DGSS. Glu281 serves as a coordination point for Mg(2+).

The protein belongs to the FBPase class 1 family. As to quaternary structure, homotetramer. Requires Mg(2+) as cofactor.

It is found in the cytoplasm. It catalyses the reaction beta-D-fructose 1,6-bisphosphate + H2O = beta-D-fructose 6-phosphate + phosphate. The protein operates within carbohydrate biosynthesis; gluconeogenesis. This is Fructose-1,6-bisphosphatase class 1 from Nitrosococcus oceani (strain ATCC 19707 / BCRC 17464 / JCM 30415 / NCIMB 11848 / C-107).